The primary structure comprises 1238 residues: ATP-dependent helicase/nuclease subunit A (1238 aa).

The region spanning 6–474 is the UvrD-like helicase ATP-binding domain; it reads TKWTETQKSA…IKLSENFRSR (469 aa). Residue 27 to 34 participates in ATP binding; that stretch reads AGAGTGKT. A UvrD-like helicase C-terminal domain is found at 512-811; sequence PFEGNCGGDV…RIMSIHKSKG (300 aa).

This sequence belongs to the helicase family. AddA subfamily. As to quaternary structure, heterodimer of AddA and AddB/RexB. Mg(2+) is required as a cofactor.

It catalyses the reaction Couples ATP hydrolysis with the unwinding of duplex DNA by translocating in the 3'-5' direction.. It carries out the reaction ATP + H2O = ADP + phosphate + H(+). The heterodimer acts as both an ATP-dependent DNA helicase and an ATP-dependent, dual-direction single-stranded exonuclease. Recognizes the chi site generating a DNA molecule suitable for the initiation of homologous recombination. The AddA nuclease domain is required for chi fragment generation; this subunit has the helicase and 3' -&gt; 5' nuclease activities. This is ATP-dependent helicase/nuclease subunit A from Clostridium kluyveri (strain NBRC 12016).